Consider the following 396-residue polypeptide: Acetate kinase (396 aa).

Position 8 (asparagine 8) interacts with Mg(2+). An ATP-binding site is contributed by lysine 15. Arginine 89 serves as a coordination point for substrate. The active-site Proton donor/acceptor is aspartate 146. ATP is bound by residues 206–210 (HLGNG), 280–282 (DMR), and 328–332 (GVGEN). Glutamate 382 lines the Mg(2+) pocket.

This sequence belongs to the acetokinase family. In terms of assembly, homodimer. It depends on Mg(2+) as a cofactor. Requires Mn(2+) as cofactor.

The protein resides in the cytoplasm. It carries out the reaction acetate + ATP = acetyl phosphate + ADP. The protein operates within metabolic intermediate biosynthesis; acetyl-CoA biosynthesis; acetyl-CoA from acetate: step 1/2. Catalyzes the formation of acetyl phosphate from acetate and ATP. Can also catalyze the reverse reaction. In Clavibacter michiganensis subsp. michiganensis (strain NCPPB 382), this protein is Acetate kinase.